Reading from the N-terminus, the 269-residue chain is Glucosyl-3-phosphoglycerate/mannosyl-3-phosphoglycerate phosphatase (269 aa).

Asp6 serves as the catalytic Nucleophile. Mg(2+) contacts are provided by Asp6, Asp8, and Asp210.

Belongs to the HAD-like hydrolase superfamily. MPGP family. In terms of assembly, monomer. The cofactor is Co(2+). Mg(2+) serves as cofactor.

It catalyses the reaction (2R)-2-O-(alpha-D-glucopyranosyl)-3-phospho-glycerate + H2O = (2R)-2-O-(alpha-D-glucopyranosyl)-glycerate + phosphate. It carries out the reaction 2-O-(alpha-D-mannosyl)-3-phosphoglycerate + H2O = (2R)-2-O-(alpha-D-mannosyl)-glycerate + phosphate. Involved in the biosynthesis of glucosylglycerate. Catalyzes the dephosphorylation of glucosyl-3-phosphoglycerate (GPG) and mannosyl-3-phosphoglycerate (MPG) to glucosylglycerate (GG) and mannosylglycerate (MG), respectively. The polypeptide is Glucosyl-3-phosphoglycerate/mannosyl-3-phosphoglycerate phosphatase (Persephonella marina (strain DSM 14350 / EX-H1)).